We begin with the raw amino-acid sequence, 661 residues long: 72 kDa type IV collagenase (661 aa).

Positions 1–30 (MTEARVSRGALAALLRALCALGCLLGRAAA) are cleaved as a signal peptide. Positions 31 to 110 (APSPIIKFPG…PRCGNPDVAN (80 aa)) are cleaved as a propeptide — activation peptide. Positions 101–108 (PRCGNPDV) match the Cysteine switch motif. Cys-103 is a binding site for Zn(2+). Residues 111-222 (YNFFPRKPKW…LRTLGEGQVV (112 aa)) form a collagenase-like 1 region. Residues Asp-135 and Asp-169 each coordinate Ca(2+). Residues His-179 and Asp-181 each coordinate Zn(2+). Residues Asp-186 and Gly-187 each coordinate Ca(2+). A Zn(2+)-binding site is contributed by His-194. Ca(2+)-binding residues include Gly-201, Gly-203, and Asp-205. His-207 contacts Zn(2+). The Ca(2+) site is built by Asp-209, Asp-210, and Glu-212. The interval 223–397 (RVKYGNADGE…WGFCPDQGYS (175 aa)) is collagen-binding. Fibronectin type-II domains are found at residues 229 to 277 (ADGE…FCPH), 287 to 335 (ADGQ…FCPE), and 345 to 393 (SEGA…FCPD). Cystine bridges form between Cys-234-Cys-260, Cys-248-Cys-275, Cys-292-Cys-318, Cys-306-Cys-333, Cys-350-Cys-376, and Cys-364-Cys-391. The segment at 398–466 (LFLVAAHEFG…GPTPTLGPVT (69 aa)) is collagenase-like 2. His-404 is a Zn(2+) binding site. Glu-405 is an active-site residue. Zn(2+)-binding residues include His-408 and His-414. The segment at 415–661 (SQDPGALMAP…GSIKSDWLGC (247 aa)) is required for inhibitor TIMP2 binding. Hemopexin repeat units follow at residues 469–517 (LCKQ…WPEL), 518–564 (PEKI…GLPP), 566–614 (VQKV…WNAI), and 615–661 (PDNL…WLGC). Cys-470 and Cys-661 are oxidised to a cystine. Residues Asp-477, Asp-522, and Asp-570 each coordinate Ca(2+). The N-linked (GlcNAc...) asparagine glycan is linked to Asn-574. A Ca(2+)-binding site is contributed by Asp-619. Asn-643 carries an N-linked (GlcNAc...) asparagine glycan.

The protein belongs to the peptidase M10A family. As to quaternary structure, interacts (via the C-terminal hemopexin-like domains-containing region) with the integrin alpha-V/beta-3; the interaction promotes vascular invasion in angiogenic vessels and melamoma cells. Interacts (via the C-terminal PEX domain) with TIMP2 (via the C-terminal); the interaction inhibits the degradation activity. Interacts with GSK3B. The cofactor is Ca(2+). It depends on Zn(2+) as a cofactor. In terms of processing, phosphorylation on multiple sites modulates enzymatic activity. Phosphorylated by PKC in vitro. Post-translationally, the propeptide is processed by MMP14 (MT-MMP1) and MMP16 (MT-MMP3). Autocatalytic cleavage in the C-terminal produces the anti-angiogenic peptide, PEX. This processing appears to be facilitated by binding integrinv/beta3.

Its subcellular location is the secreted. It is found in the extracellular space. The protein localises to the extracellular matrix. The protein resides in the membrane. It localises to the nucleus. The catalysed reaction is Cleavage of gelatin type I and collagen types IV, V, VII, X. Cleaves the collagen-like sequence Pro-Gln-Gly-|-Ile-Ala-Gly-Gln.. Its function is as follows. Ubiquitinous metalloproteinase that is involved in diverse functions such as remodeling of the vasculature, angiogenesis, tissue repair, tumor invasion, inflammation, and atherosclerotic plaque rupture. As well as degrading extracellular matrix proteins, can also act on several nonmatrix proteins such as big endothelial 1 and beta-type CGRP promoting vasoconstriction. Also cleaves KISS at a Gly-|-Leu bond. Appears to have a role in myocardial cell death pathways. Contributes to myocardial oxidative stress by regulating the activity of GSK3beta. Cleaves GSK3beta in vitro. Involved in the formation of the fibrovascular tissues. Functionally, PEX, the C-terminal non-catalytic fragment of MMP2, possesses anti-angiogenic and anti-tumor properties and inhibits cell migration and cell adhesion to FGF2 and vitronectin. Ligand for integrin alpha-v/beta-3 on the surface of blood vessels. In Bos taurus (Bovine), this protein is 72 kDa type IV collagenase (MMP2).